The chain runs to 525 residues: ATP synthase subunit beta, mitochondrial (525 aa).

The N-terminal 44 residues, 1–44 (MLKKQALSGIRRFSLATKQSFVKTSYKLPRKSWLNTAKFNTIRY), are a transit peptide targeting the mitochondrion. An ATP-binding site is contributed by 203 to 210 (GGAGVGKT).

This sequence belongs to the ATPase alpha/beta chains family. As to quaternary structure, F-type ATPases have 2 components, CF(1) - the catalytic core - and CF(0) - the membrane proton channel. CF(1) has five subunits: alpha(3), beta(3), gamma(1), delta(1), epsilon(1). CF(0) has three main subunits: a, b and c.

It is found in the mitochondrion. The protein localises to the mitochondrion inner membrane. It catalyses the reaction ATP + H2O + 4 H(+)(in) = ADP + phosphate + 5 H(+)(out). Its function is as follows. Mitochondrial membrane ATP synthase (F(1)F(0) ATP synthase or Complex V) produces ATP from ADP in the presence of a proton gradient across the membrane which is generated by electron transport complexes of the respiratory chain. F-type ATPases consist of two structural domains, F(1) - containing the extramembraneous catalytic core, and F(0) - containing the membrane proton channel, linked together by a central stalk and a peripheral stalk. During catalysis, ATP synthesis in the catalytic domain of F(1) is coupled via a rotary mechanism of the central stalk subunits to proton translocation. Subunits alpha and beta form the catalytic core in F(1). Rotation of the central stalk against the surrounding alpha(3)beta(3) subunits leads to hydrolysis of ATP in three separate catalytic sites on the beta subunits. This is ATP synthase subunit beta, mitochondrial (atp2) from Schizosaccharomyces pombe (strain 972 / ATCC 24843) (Fission yeast).